Reading from the N-terminus, the 156-residue chain is ATP synthase subunit b (156 aa).

Residues 11 to 31 form a helical membrane-spanning segment; it reads AIAFVLFVLFCMKYVWPPLMA.

Belongs to the ATPase B chain family. F-type ATPases have 2 components, F(1) - the catalytic core - and F(0) - the membrane proton channel. F(1) has five subunits: alpha(3), beta(3), gamma(1), delta(1), epsilon(1). F(0) has three main subunits: a(1), b(2) and c(10-14). The alpha and beta chains form an alternating ring which encloses part of the gamma chain. F(1) is attached to F(0) by a central stalk formed by the gamma and epsilon chains, while a peripheral stalk is formed by the delta and b chains.

Its subcellular location is the cell inner membrane. Its function is as follows. F(1)F(0) ATP synthase produces ATP from ADP in the presence of a proton or sodium gradient. F-type ATPases consist of two structural domains, F(1) containing the extramembraneous catalytic core and F(0) containing the membrane proton channel, linked together by a central stalk and a peripheral stalk. During catalysis, ATP synthesis in the catalytic domain of F(1) is coupled via a rotary mechanism of the central stalk subunits to proton translocation. Component of the F(0) channel, it forms part of the peripheral stalk, linking F(1) to F(0). The sequence is that of ATP synthase subunit b from Citrobacter koseri (strain ATCC BAA-895 / CDC 4225-83 / SGSC4696).